The sequence spans 570 residues: Probable metalloreductase AIM14 (570 aa).

Topologically, residues 1-20 (MKESPLITLVKRHSETHFAN) are extracellular. A helical transmembrane segment spans residues 21–41 (IKYGYYVLIISLVYLIGLALL). At 42–69 (RAFGRRTPSRSSSAFKNKIIYRLYDIDP) the chain is on the cytoplasmic side. Residues 70–90 (AIHLGILFFAVLIPFYYHYSL) traverse the membrane as a helical segment. Topologically, residues 91–141 (TTQSTVYLKRLGRLSYALIPLNLFLTLRPNWFLRKNCTYTDFIPFHKWFSR) are extracellular. The Ferric oxidoreductase domain occupies 101–219 (LGRLSYALIP…NLVNVAFILL (119 aa)). Residues 142–162 (IITVIGLLHGIFFIIKWAIDD) form a helical membrane-spanning segment. The Cytoplasmic segment spans residues 163–176 (NVSLKQKLILKTFN). The helical transmembrane segment at 177–197 (FAGFIISILVLFLLICSIGPM) threads the bilayer. Topologically, residues 198–373 (RRYNYRLFYI…PEECYSQGTN (176 aa)) are extracellular. Positions 250-388 (FAKSLMILNK…GGSGISFALP (139 aa)) constitute an FAD-binding FR-type domain. Residues 374–394 (IAIICGGSGISFALPLFRHFF) traverse the membrane as a helical segment. Residues 395–570 (NKENVKYLKM…INFVCETYGL (176 aa)) lie on the Cytoplasmic side of the membrane. The span at 480–505 (ISNFNSENADSNDNTPETSHSPTKEN) shows a compositional bias: polar residues. The tract at residues 480–509 (ISNFNSENADSNDNTPETSHSPTKENGSMI) is disordered.

The protein belongs to the ferric reductase (FRE) family. AIM14 subfamily. In terms of assembly, interacts with ribosomes.

Its subcellular location is the membrane. Its function is as follows. Probable cell surface metalloreductase. May be involved in iron or copper homeostasis. The chain is Probable metalloreductase AIM14 (AIM14) from Saccharomyces cerevisiae (strain ATCC 204508 / S288c) (Baker's yeast).